A 583-amino-acid chain; its full sequence is uncharacterized protein (583 aa).

This is an uncharacterized protein from Sinorhizobium fredii (strain NBRC 101917 / NGR234).